Reading from the N-terminus, the 484-residue chain is MANKIRVRYAPSPTGLLHIGNARTALFNYLYARHHGGDFVIRIEDTDRKRHVEDGERSQLENLRWLGMDWDESPETHENYRQSERLELYQRYIDQLLAEGKAYKSYVTEEELAAERERQELAGETPRYINEFIGMSETEKEAYIAEREAAGIIPTVRLAVSESGIYKWTDMVKGDIEFEGSNIGGDWVIQKKDGYPTYNFAVVIDDHVMQISHVIRGDDHIANTPKQLMVYEALGWEAPQFGHMTLIINSETGKKLSKRDTNTLQFIEDYRKKGYMSEAVFNFIALLGWNPGGEEEIFSREQLINLFDENRLSKSPAAFDQKKMDWMSNDYLKNADFESVFALCKPFLEEAGRLTDKAEKLVELYKPQLKSADEIVPLTDLFFADFPELTEAEKEVMAAETVPTVLSVFKEKLVSLSDEEFTRDTIFPQIKAVQKETGIKGKNLFMPIRIAVSGEMHGPELPDTIYLLGKEKSVQHIDNMLAKL.

The 'HIGH' region motif lies at 11-21; that stretch reads PSPTGLLHIGN. The short motif at 255 to 259 is the 'KMSKS' region element; it reads KLSKR. Residue lysine 258 participates in ATP binding.

The protein belongs to the class-I aminoacyl-tRNA synthetase family. Glutamate--tRNA ligase type 1 subfamily. In terms of assembly, monomer.

The protein localises to the cytoplasm. The enzyme catalyses tRNA(Glu) + L-glutamate + ATP = L-glutamyl-tRNA(Glu) + AMP + diphosphate. In terms of biological role, catalyzes the attachment of glutamate to tRNA(Glu) in a two-step reaction: glutamate is first activated by ATP to form Glu-AMP and then transferred to the acceptor end of tRNA(Glu). The polypeptide is Glutamate--tRNA ligase (Streptococcus agalactiae serotype Ia (strain ATCC 27591 / A909 / CDC SS700)).